Here is a 143-residue protein sequence, read N- to C-terminus: Nucleoside diphosphate kinase (143 aa).

Lys-11, Phe-59, Arg-87, Thr-93, Arg-104, and Asn-114 together coordinate ATP. His-117 functions as the Pros-phosphohistidine intermediate in the catalytic mechanism.

The protein belongs to the NDK family. In terms of assembly, homotetramer. The cofactor is Mg(2+).

The protein localises to the cytoplasm. It carries out the reaction a 2'-deoxyribonucleoside 5'-diphosphate + ATP = a 2'-deoxyribonucleoside 5'-triphosphate + ADP. The enzyme catalyses a ribonucleoside 5'-diphosphate + ATP = a ribonucleoside 5'-triphosphate + ADP. In terms of biological role, major role in the synthesis of nucleoside triphosphates other than ATP. The ATP gamma phosphate is transferred to the NDP beta phosphate via a ping-pong mechanism, using a phosphorylated active-site intermediate. The polypeptide is Nucleoside diphosphate kinase (Pseudoalteromonas atlantica (strain T6c / ATCC BAA-1087)).